We begin with the raw amino-acid sequence, 860 residues long: Protein argonaute-3 (860 aa).

Met-1 carries the N-acetylmethionine modification. The 120-residue stretch at 230-349 (PVIQFMCEVL…LPLEVCNIVA (120 aa)) folds into the PAZ domain. In terms of domain architecture, Piwi spans 518 to 819 (LIIVILPGKT…VAFRARYHLV (302 aa)). An interaction with guide RNA region spans residues 530 to 567 (YAEVKRVGDTLLGMATQCVQVKNVIKTSPQTLSNLCLK). A divalent metal cation contacts are provided by Asp-598, Glu-638, and Asp-670. An interaction with guide RNA region spans residues 758–805 (QGTSRPSHYHVLWDDNFFTADELQLLTYQLCHTYVRCTRSVSIPAPAY). An a divalent metal cation-binding site is contributed by His-808. At Ser-825 the chain carries Phosphoserine.

Belongs to the argonaute family. Ago subfamily. As to quaternary structure, interacts with EIF4B, IMP8, PRMT5 and TNRC6B. Interacts with APOBEC3F, APOBEC3G and APOBEC3H. Interacts with EDC4. In terms of processing, ubiquitinated on surface-exposed lysines by a SCF-like E3 ubiquitin-protein ligase complex containing ZSWIM8 during target-directed microRNA degradation (TDMD), a process that mediates degradation of microRNAs (miRNAs). Ubiquitination by the SCF-like E3 ubiquitin-protein ligase complex containing ZSWIM8 leads to its subsequent degradation, thereby exposing miRNAs for degradation. ZSWIM8 recognizes and binds AGO3 when it is engaged with a TDMD target.

It is found in the cytoplasm. The protein resides in the P-body. The catalysed reaction is Endonucleolytic cleavage to 5'-phosphomonoester.. In terms of biological role, required for RNA-mediated gene silencing (RNAi). Binds to short RNAs such as microRNAs (miRNAs) and represses the translation of mRNAs which are complementary to them. Proposed to be involved in stabilization of small RNA derivates (siRNA) derived from processed RNA polymerase III-transcribed Alu repeats containing a DR2 retinoic acid response element (RARE) in stem cells and in the subsequent siRNA-dependent degradation of a subset of RNA polymerase II-transcribed coding mRNAs by recruiting a mRNA decapping complex involving EDC4. Possesses RNA slicer activity but only on select RNAs bearing 5'- and 3'-flanking sequences to the region of guide-target complementarity. This is Protein argonaute-3 (Ago3) from Mus musculus (Mouse).